Consider the following 299-residue polypeptide: Apolipoprotein E (299 aa).

The signal sequence occupies residues 1-18; the sequence is MKVLCTVLVVTLLAGCRA. The 8 X 22 AA approximate tandem repeats stretch occupies residues 74–245; it reads VLMEDTMKAV…RLEEVREQME (172 aa). 8 consecutive repeat copies span residues 75–95, 96–117, 118–139, 140–161, 162–183, 184–206, 207–225, and 224–242. The residue at position 137 (Met137) is a Methionine sulfoxide. Phosphoserine is present on Ser141. The LDL and other lipoprotein receptors binding stretch occupies residues 152 to 162; sequence HLRKLRKRMLR. 156-159 contributes to the heparin binding site; that stretch reads LRKR. Residues 205–273 form a lipid-binding and lipoprotein association region; the sequence is ALTSQPLQER…GWFEPMVEDM (69 aa). Position 219-226 (219-226) interacts with heparin; that stretch reads GKQLRGRL. A specificity for association with VLDL region spans residues 261 to 273; the sequence is RLKGWFEPMVEDM.

This sequence belongs to the apolipoprotein A1/A4/E family. In terms of assembly, homotetramer. May interact with ABCA1; functionally associated with ABCA1 in the biogenesis of HDLs. May interact with APP/A4 amyloid-beta peptide; the interaction is extremely stable in vitro but its physiological significance is unclear. May interact with MAPT. May interact with MAP2. In the cerebrospinal fluid, interacts with secreted SORL1. Interacts with PMEL; this allows the loading of PMEL luminal fragment on ILVs to induce fibril nucleation. APOE exists as multiple glycosylated and sialylated glycoforms within cells and in plasma. The extent of glycosylation and sialylation are tissue and context specific. In terms of processing, glycated in plasma VLDL. Post-translationally, phosphorylated by FAM20C in the extracellular medium.

The protein localises to the secreted. Its subcellular location is the extracellular space. It localises to the extracellular matrix. The protein resides in the extracellular vesicle. It is found in the endosome. The protein localises to the multivesicular body. Functionally, APOE is an apolipoprotein, a protein associating with lipid particles, that mainly functions in lipoprotein-mediated lipid transport between organs via the plasma and interstitial fluids. APOE is a core component of plasma lipoproteins and is involved in their production, conversion and clearance. Apolipoproteins are amphipathic molecules that interact both with lipids of the lipoprotein particle core and the aqueous environment of the plasma. As such, APOE associates with chylomicrons, chylomicron remnants, very low density lipoproteins (VLDL) and intermediate density lipoproteins (IDL) but shows a preferential binding to high-density lipoproteins (HDL). It also binds a wide range of cellular receptors including the LDL receptor/LDLR, the LDL receptor-related proteins LRP1, LRP2 and LRP8 and the very low-density lipoprotein receptor/VLDLR that mediate the cellular uptake of the APOE-containing lipoprotein particles. Finally, APOE also has a heparin-binding activity and binds heparan-sulfate proteoglycans on the surface of cells, a property that supports the capture and the receptor-mediated uptake of APOE-containing lipoproteins by cells. A main function of APOE is to mediate lipoprotein clearance through the uptake of chylomicrons, VLDLs, and HDLs by hepatocytes. APOE is also involved in the biosynthesis by the liver of VLDLs as well as their uptake by peripheral tissues ensuring the delivery of triglycerides and energy storage in muscle, heart and adipose tissues. By participating in the lipoprotein-mediated distribution of lipids among tissues, APOE plays a critical role in plasma and tissues lipid homeostasis. APOE is also involved in two steps of reverse cholesterol transport, the HDLs-mediated transport of cholesterol from peripheral tissues to the liver, and thereby plays an important role in cholesterol homeostasis. First, it is functionally associated with ABCA1 in the biogenesis of HDLs in tissues. Second, it is enriched in circulating HDLs and mediates their uptake by hepatocytes. APOE also plays an important role in lipid transport in the central nervous system, regulating neuron survival and sprouting. In Tympanoctomys barrerae (Plains viscacha rat), this protein is Apolipoprotein E (Apoe).